A 260-amino-acid polypeptide reads, in one-letter code: ATP-dependent zinc metalloprotease FTSH, chloroplastic (260 aa).

A Zn(2+)-binding site is contributed by H219. Residue E220 is part of the active site. Residue H223 participates in Zn(2+) binding.

This sequence in the N-terminal section; belongs to the AAA ATPase family. In the C-terminal section; belongs to the peptidase M41 family. Zn(2+) is required as a cofactor.

It is found in the plastid. Its subcellular location is the chloroplast thylakoid membrane. Functionally, probable ATP-dependent zinc metallopeptidase. The protein is ATP-dependent zinc metalloprotease FTSH, chloroplastic of Helianthus annuus (Common sunflower).